The following is a 284-amino-acid chain: MKLGDFEIGLDKPFFLIAGTCVVESEQMTIDTAGKLKEICAKLKIPFIYKSSYDKANRSSGKSFRGLGMDEGLRILSEVKRQLGLHVLTDVHSEHEIEPVASVVDVLQTPAFLCRQTDFIHACARSGKPVNIKKGQFLAPHDMKNVIDKARDAAREAGLSEDRFMACERGVSFGYNNLVSDMRSLAIMRETGAPVVFDATHSVQLPGGQGTSSGGQREFVPVLARAAVATGIAGLFMETHPNPAEAKSDGPNAVPLHRMADLLETLMTLDQAVKRTPFLENDFN.

The protein belongs to the KdsA family.

Its subcellular location is the cytoplasm. It carries out the reaction D-arabinose 5-phosphate + phosphoenolpyruvate + H2O = 3-deoxy-alpha-D-manno-2-octulosonate-8-phosphate + phosphate. The protein operates within carbohydrate biosynthesis; 3-deoxy-D-manno-octulosonate biosynthesis; 3-deoxy-D-manno-octulosonate from D-ribulose 5-phosphate: step 2/3. It functions in the pathway bacterial outer membrane biogenesis; lipopolysaccharide biosynthesis. This Paraburkholderia phymatum (strain DSM 17167 / CIP 108236 / LMG 21445 / STM815) (Burkholderia phymatum) protein is 2-dehydro-3-deoxyphosphooctonate aldolase.